A 132-amino-acid chain; its full sequence is Small ribosomal subunit protein uS8 (132 aa).

It belongs to the universal ribosomal protein uS8 family. Part of the 30S ribosomal subunit. Contacts proteins S5 and S12.

In terms of biological role, one of the primary rRNA binding proteins, it binds directly to 16S rRNA central domain where it helps coordinate assembly of the platform of the 30S subunit. The protein is Small ribosomal subunit protein uS8 of Bifidobacterium adolescentis (strain ATCC 15703 / DSM 20083 / NCTC 11814 / E194a).